Reading from the N-terminus, the 232-residue chain is Enolase-phosphatase E1 (232 aa).

This sequence belongs to the HAD-like hydrolase superfamily. MasA/MtnC family. In terms of assembly, monomer. It depends on Mg(2+) as a cofactor.

It catalyses the reaction 5-methylsulfanyl-2,3-dioxopentyl phosphate + H2O = 1,2-dihydroxy-5-(methylsulfanyl)pent-1-en-3-one + phosphate. The protein operates within amino-acid biosynthesis; L-methionine biosynthesis via salvage pathway; L-methionine from S-methyl-5-thio-alpha-D-ribose 1-phosphate: step 3/6. Its pathway is amino-acid biosynthesis; L-methionine biosynthesis via salvage pathway; L-methionine from S-methyl-5-thio-alpha-D-ribose 1-phosphate: step 4/6. Bifunctional enzyme that catalyzes the enolization of 2,3-diketo-5-methylthiopentyl-1-phosphate (DK-MTP-1-P) into the intermediate 2-hydroxy-3-keto-5-methylthiopentenyl-1-phosphate (HK-MTPenyl-1-P), which is then dephosphorylated to form the acireductone 1,2-dihydroxy-3-keto-5-methylthiopentene (DHK-MTPene). The sequence is that of Enolase-phosphatase E1 from Xanthomonas oryzae pv. oryzae (strain KACC10331 / KXO85).